Here is a 222-residue protein sequence, read N- to C-terminus: Pyridoxine/pyridoxamine 5'-phosphate oxidase (222 aa).

FMN is bound by residues 71–76, 86–87, Lys93, and Gln115; these read RMVLLK and YT. Lys76 serves as a coordination point for substrate. Substrate contacts are provided by Tyr133, Arg137, and Ser141. FMN is bound by residues 150 to 151 and Trp195; that span reads QS. 201–203 contributes to the substrate binding site; sequence RLH. Residue Arg205 participates in FMN binding.

It belongs to the pyridoxamine 5'-phosphate oxidase family. Homodimer. Requires FMN as cofactor.

The catalysed reaction is pyridoxamine 5'-phosphate + O2 + H2O = pyridoxal 5'-phosphate + H2O2 + NH4(+). It catalyses the reaction pyridoxine 5'-phosphate + O2 = pyridoxal 5'-phosphate + H2O2. The protein operates within cofactor metabolism; pyridoxal 5'-phosphate salvage; pyridoxal 5'-phosphate from pyridoxamine 5'-phosphate: step 1/1. Its pathway is cofactor metabolism; pyridoxal 5'-phosphate salvage; pyridoxal 5'-phosphate from pyridoxine 5'-phosphate: step 1/1. Functionally, catalyzes the oxidation of either pyridoxine 5'-phosphate (PNP) or pyridoxamine 5'-phosphate (PMP) into pyridoxal 5'-phosphate (PLP). In Caulobacter vibrioides (strain ATCC 19089 / CIP 103742 / CB 15) (Caulobacter crescentus), this protein is Pyridoxine/pyridoxamine 5'-phosphate oxidase.